A 105-amino-acid polypeptide reads, in one-letter code: uncharacterized protein (105 aa).

The helical transmembrane segment at 64-84 threads the bilayer; that stretch reads ILLISIFFLLLFALPQHTMGI.

The protein localises to the membrane. This is an uncharacterized protein from Saccharomyces cerevisiae (strain ATCC 204508 / S288c) (Baker's yeast).